A 198-amino-acid polypeptide reads, in one-letter code: Recombination protein RecR (198 aa).

The C4-type zinc finger occupies 57–72 (CSICGHITDQDPCYIC). A Toprim domain is found at 80–175 (SVICVVQDPK…KLSRIAHGLP (96 aa)).

This sequence belongs to the RecR family.

Its function is as follows. May play a role in DNA repair. It seems to be involved in an RecBC-independent recombinational process of DNA repair. It may act with RecF and RecO. In Bacillus velezensis (strain DSM 23117 / BGSC 10A6 / LMG 26770 / FZB42) (Bacillus amyloliquefaciens subsp. plantarum), this protein is Recombination protein RecR.